Reading from the N-terminus, the 1278-residue chain is NPC intracellular cholesterol transporter 1 (1278 aa).

The signal sequence occupies residues 1–22; it reads MTARGLALGLLLLLLCPAQVFS. Residues 23-261 are Lumenal-facing; that stretch reads QSCVWYGECG…QPPPPPAPWT (239 aa). Intrachain disulfides connect cysteine 25-cysteine 74, cysteine 31-cysteine 42, cysteine 63-cysteine 109, cysteine 75-cysteine 113, cysteine 97-cysteine 238, cysteine 100-cysteine 160, cysteine 177-cysteine 184, cysteine 227-cysteine 243, and cysteine 240-cysteine 247. Asparagine 41 is a binding site for cholesterol. The N-linked (GlcNAc...) asparagine glycan is linked to asparagine 70. A cholesterol-binding site is contributed by glutamine 79. N-linked (GlcNAc...) asparagine glycans are attached at residues asparagine 122 and asparagine 135. Residue asparagine 158 is glycosylated (N-linked (GlcNAc...) asparagine; atypical). Residues 175–205 form an important for cholesterol binding and cholesterol transfer from NPC1 to liposomes region; that stretch reads LLCGKDADACNATNWIEYMFNKDNGQAPFTI. 2 N-linked (GlcNAc...) asparagine glycosylation sites follow: asparagine 185 and asparagine 222. The chain crosses the membrane as a helical span at residues 262–282; sequence ILGLDAMYVIMWITYMAFLLV. At 283 to 350 the chain is on the cytoplasmic side; sequence FFGAFFAVWC…RWGSFCVRNP (68 aa). A helical transmembrane segment spans residues 351 to 371; sequence GCVIFFSLVFITACSSGLVFV. The Lumenal portion of the chain corresponds to 372–620; that stretch reads RVTTNPVDLW…DELNRESDSD (249 aa). Asparagine 452, asparagine 459, asparagine 478, asparagine 524, asparagine 557, asparagine 572, and asparagine 598 each carry an N-linked (GlcNAc...) asparagine glycan. 2 cysteine pairs are disulfide-bonded: cysteine 468/cysteine 479 and cysteine 516/cysteine 533. Residues 620–785 enclose the SSD domain; the sequence is DVFTVVISYA…ITCFVSLLGL (166 aa). Residues 621 to 641 traverse the membrane as a helical segment; it reads VFTVVISYAIMFLYISLALGH. Over 642–653 the chain is Cytoplasmic; it reads MKSCRRLLVDSK. The helical transmembrane segment at 654–675 threads the bilayer; the sequence is VSLGIAGILIVLSSVACSLGVF. The Lumenal segment spans residues 676 to 685; the sequence is SYIGLPLTLI. A helical transmembrane segment spans residues 686–706; that stretch reads VIEVIPFLVLAVGVDNIFILV. The Cytoplasmic portion of the chain corresponds to 707–730; the sequence is QAYQRDERLQGETLDQQLGRVLGE. The helical transmembrane segment at 731–751 threads the bilayer; sequence VAPSMFLSSFSETVAFFLGAL. The Lumenal portion of the chain corresponds to 752 to 759; it reads SVMPAVHT. The helical transmembrane segment at 760 to 783 threads the bilayer; it reads FSLFAGLAVFIDFLLQITCFVSLL. Over 784-832 the chain is Cytoplasmic; that stretch reads GLDIKRQEKNRLDIFCCVRGAEDGTSVQASESCLFRFFKNSYSPLLLKD. The chain crosses the membrane as a helical span at residues 833 to 853; it reads WMRPIVIAIFVGVLSFSIAVL. The Lumenal portion of the chain corresponds to 854 to 1097; it reads NKVDIGLDQS…YEQYLTIIDD (244 aa). Cysteines 909 and 914 form a disulfide. N-linked (GlcNAc...) asparagine glycans are attached at residues asparagine 916, asparagine 931, asparagine 961, asparagine 968, asparagine 1064, and asparagine 1072. 3 disulfides stabilise this stretch: cysteine 956–cysteine 1011, cysteine 957–cysteine 979, and cysteine 967–cysteine 976. Residues 1098-1118 traverse the membrane as a helical segment; that stretch reads TIFNLGVSLGAIFLVTMVLLG. Residues 1119-1124 are Cytoplasmic-facing; that stretch reads CELWSA. The helical transmembrane segment at 1125–1145 threads the bilayer; sequence VIMCATIAMVLVNMFGVMWLW. At 1146–1150 the chain is on the lumenal side; sequence GISLN. Residues 1151–1171 traverse the membrane as a helical segment; sequence AVSLVNLVMSCGISVEFCSHI. Residues 1172–1194 lie on the Cytoplasmic side of the membrane; that stretch reads TRAFTVSMKGSRVERAEEALAHM. Residues 1195 to 1215 traverse the membrane as a helical segment; the sequence is GSSVFSGITLTKFGGIVVLAF. Residues 1216 to 1223 lie on the Lumenal side of the membrane; it reads AKSQIFQI. The chain crosses the membrane as a helical span at residues 1224-1244; sequence FYFRMYLAMVLLGATHGLIFL. The Cytoplasmic segment spans residues 1245–1278; the sequence is PVLLSYIGPSVNKAKSCATEERYKGTERERLLNF. The interval 1275 to 1278 is required for location in lysosomes; the sequence is LLNF. Residues 1275–1278 carry the Di-leucine motif motif; the sequence is LLNF.

Belongs to the patched family. As to quaternary structure, interacts (via the second lumenal domain) with NPC2. Interacts with TMEM97; the interaction may decrease NPC1 availability to the cell. Interacts with TIM1. Interacts with SLC38A9; this interaction inhibits cholesterol-mediated mTORC1 activation via its sterol transport activity. (Microbial infection) Interacts with ebolavirus glycoprotein. In terms of processing, N-glycosylated.

It is found in the late endosome membrane. The protein localises to the lysosome membrane. The catalysed reaction is cholesterol(in) = cholesterol(out). Intracellular cholesterol transporter which acts in concert with NPC2 and plays an important role in the egress of cholesterol from the endosomal/lysosomal compartment. Unesterified cholesterol that has been released from LDLs in the lumen of the late endosomes/lysosomes is transferred by NPC2 to the cholesterol-binding pocket in the N-terminal domain of NPC1. Cholesterol binds to NPC1 with the hydroxyl group buried in the binding pocket. Binds oxysterol with higher affinity than cholesterol. May play a role in vesicular trafficking in glia, a process that may be crucial for maintaining the structural and functional integrity of nerve terminals. Inhibits cholesterol-mediated mTORC1 activation throught its interaction with SLC38A9. Its function is as follows. (Microbial infection) Acts as an endosomal entry receptor for ebolavirus. The polypeptide is NPC intracellular cholesterol transporter 1 (Homo sapiens (Human)).